Consider the following 730-residue polypeptide: Actin filament-associated protein 1 (730 aa).

An N-acetylmethionine modification is found at M1. The segment at 47-91 (KDHAQKQETANSLPAPPQMPLPEIPQPWLPPDSGPPPLPTSSLPE) is disordered. A compositionally biased stretch (pro residues) spans 60–85 (PAPPQMPLPEIPQPWLPPDSGPPPLP). An SH3-binding motif is present at residues 71-74 (PQPW). The SH2-binding 1 signature appears at 94 to 97 (YEEA). Residues 119–140 (SSSYESYDEEEEDGKGKKTRHQ) form a disordered region. Residues 153-249 (DAKICAFLLR…WLKVIKEAYS (97 aa)) enclose the PH 1 domain. The interval 252-292 (SGPVDSECPPPPSSPVHKAELEKKLSSERPSSDGEGVVENG) is disordered. Over residues 268 to 283 (HKAELEKKLSSERPSS) the composition is skewed to basic and acidic residues. Phosphoserine is present on residues S282 and S283. Residues 347–441 (DVPTCGYLNV…WIGILLAETG (95 aa)) form the PH 2 domain. An SH2-binding 2 motif is present at residues 451-456 (YDYIDV). A disordered region spans residues 512–537 (KGKKPPVASNGVTGKGKTLSSQPKKA). Position 548 is a phosphoserine (S548). Residues 557–648 (KNRVEADAKR…VKESLKKALA (92 aa)) are a coiled coil. The interaction with F-actin stretch occupies residues 594 to 637 (DLRAAIEVNAGRKPQAILEEKLKQLEEECRQKEAERVSLELELT). Residues S664, S665, and S668 each carry the phosphoserine modification. Residue T675 is modified to Phosphothreonine. Residues S679 and S687 each carry the phosphoserine modification.

Monomer and homomultimer. Interacts via its C-terminus with F-actin; probably involving AFAP1 multimers. Interacts with activated SRC SH3-SH2 domains. Interacts via its PH 1 domain with PRKCA, PRKCB and PRKCI. Phosphorylated on tyrosine residues by SRC. As to expression, low expression in normal breast epithelial cell line MCF-10A and in tumorigenic breast cancer cell lines MCF-7, T-47D and ZR-75-1. Highly expressed in the invasive breast cancer cell lines MDA-MB-231 and MDA-MB-435. Overexpressed in prostate carcinoma.

The protein localises to the cytoplasm. It localises to the cytoskeleton. Its subcellular location is the stress fiber. Functionally, can cross-link actin filaments into both network and bundle structures. May modulate changes in actin filament integrity and induce lamellipodia formation. May function as an adapter molecule that links other proteins, such as SRC and PKC to the actin cytoskeleton. Seems to play a role in the development and progression of prostate adenocarcinoma by regulating cell-matrix adhesions and migration in the cancer cells. The protein is Actin filament-associated protein 1 (AFAP1) of Homo sapiens (Human).